Reading from the N-terminus, the 499-residue chain is Glutamyl-tRNA(Gln) amidotransferase subunit A (499 aa).

Catalysis depends on charge relay system residues lysine 79 and serine 159. The Acyl-ester intermediate role is filled by serine 183.

Belongs to the amidase family. GatA subfamily. Heterotrimer of A, B and C subunits.

It carries out the reaction L-glutamyl-tRNA(Gln) + L-glutamine + ATP + H2O = L-glutaminyl-tRNA(Gln) + L-glutamate + ADP + phosphate + H(+). In terms of biological role, allows the formation of correctly charged Gln-tRNA(Gln) through the transamidation of misacylated Glu-tRNA(Gln) in organisms which lack glutaminyl-tRNA synthetase. The reaction takes place in the presence of glutamine and ATP through an activated gamma-phospho-Glu-tRNA(Gln). This chain is Glutamyl-tRNA(Gln) amidotransferase subunit A, found in Granulibacter bethesdensis (strain ATCC BAA-1260 / CGDNIH1).